We begin with the raw amino-acid sequence, 141 residues long: Lutropin subunit beta (141 aa).

A signal peptide spans 1-20 (MEMLQGLLLWLLLNVGGVWA). 6 cysteine pairs are disulfide-bonded: cysteine 29–cysteine 77, cysteine 43–cysteine 92, cysteine 46–cysteine 130, cysteine 54–cysteine 108, cysteine 58–cysteine 110, and cysteine 113–cysteine 120. Residue asparagine 33 is glycosylated (N-linked (GlcNAc...) asparagine).

The protein belongs to the glycoprotein hormones subunit beta family. In terms of assembly, heterodimer of a common alpha chain and a unique beta chain which confers biological specificity to thyrotropin, lutropin, follitropin and gonadotropin.

The protein localises to the secreted. Functionally, promotes spermatogenesis and ovulation by stimulating the testes and ovaries to synthesize steroids. The polypeptide is Lutropin subunit beta (LHB) (Ailurus fulgens (Himalayan red panda)).